Reading from the N-terminus, the 284-residue chain is D-tagatose-1,6-bisphosphate aldolase subunit GatY (284 aa).

Asp82 serves as the catalytic Proton donor. His83 and His180 together coordinate Zn(2+). Gly181 lines the dihydroxyacetone phosphate pocket. His208 lines the Zn(2+) pocket. Dihydroxyacetone phosphate is bound by residues Gly209–Ser211 and Asn230–Thr233.

The protein belongs to the class II fructose-bisphosphate aldolase family. TagBP aldolase GatY subfamily. In terms of assembly, forms a complex with GatZ. The cofactor is Zn(2+).

It carries out the reaction D-tagatofuranose 1,6-bisphosphate = D-glyceraldehyde 3-phosphate + dihydroxyacetone phosphate. The protein operates within carbohydrate metabolism; D-tagatose 6-phosphate degradation; D-glyceraldehyde 3-phosphate and glycerone phosphate from D-tagatose 6-phosphate: step 2/2. Catalytic subunit of the tagatose-1,6-bisphosphate aldolase GatYZ, which catalyzes the reversible aldol condensation of dihydroxyacetone phosphate (DHAP or glycerone-phosphate) with glyceraldehyde 3-phosphate (G3P) to produce tagatose 1,6-bisphosphate (TBP). Requires GatZ subunit for full activity and stability. Is involved in the catabolism of galactitol. This chain is D-tagatose-1,6-bisphosphate aldolase subunit GatY, found in Escherichia coli O139:H28 (strain E24377A / ETEC).